Consider the following 94-residue polypeptide: Large ribosomal subunit protein eL42 (94 aa).

Positions 11, 14, 71, and 74 each coordinate Zn(2+). The C4-type zinc finger occupies 11-74 (CPFCKKHTIH…LDLRFRCTEC (64 aa)).

Belongs to the eukaryotic ribosomal protein eL42 family. As to quaternary structure, part of the 50S ribosomal subunit. It depends on Zn(2+) as a cofactor.

Its function is as follows. Binds to the 23S rRNA. This Pyrococcus furiosus (strain ATCC 43587 / DSM 3638 / JCM 8422 / Vc1) protein is Large ribosomal subunit protein eL42.